A 322-amino-acid chain; its full sequence is Transaldolase (322 aa).

Lys-136 acts as the Schiff-base intermediate with substrate in catalysis.

This sequence belongs to the transaldolase family. Type 1 subfamily. As to quaternary structure, homodimer.

It is found in the cytoplasm. It catalyses the reaction D-sedoheptulose 7-phosphate + D-glyceraldehyde 3-phosphate = D-erythrose 4-phosphate + beta-D-fructose 6-phosphate. The protein operates within carbohydrate degradation; pentose phosphate pathway; D-glyceraldehyde 3-phosphate and beta-D-fructose 6-phosphate from D-ribose 5-phosphate and D-xylulose 5-phosphate (non-oxidative stage): step 2/3. Its function is as follows. Transaldolase is important for the balance of metabolites in the pentose-phosphate pathway. The polypeptide is Transaldolase (Xanthomonas oryzae pv. oryzae (strain MAFF 311018)).